A 332-amino-acid chain; its full sequence is ADP-L-glycero-D-manno-heptose-6-epimerase (332 aa).

NADP(+) is bound by residues 10–11 (MI), 31–32 (DK), Lys-38, Lys-53, 75–79 (MGACS), and Asn-92. The Proton acceptor role is filled by Tyr-145. Lys-149 is a binding site for NADP(+). Substrate is bound at residue Asn-173. Residues Val-174 and Lys-182 each contribute to the NADP(+) site. The active-site Proton acceptor is Lys-182. Residues Arg-184, His-191, 205–208 (FKSY), Arg-219, and Tyr-290 contribute to the substrate site.

The protein belongs to the NAD(P)-dependent epimerase/dehydratase family. HldD subfamily. Homopentamer. It depends on NADP(+) as a cofactor.

It carries out the reaction ADP-D-glycero-beta-D-manno-heptose = ADP-L-glycero-beta-D-manno-heptose. It participates in nucleotide-sugar biosynthesis; ADP-L-glycero-beta-D-manno-heptose biosynthesis; ADP-L-glycero-beta-D-manno-heptose from D-glycero-beta-D-manno-heptose 7-phosphate: step 4/4. Functionally, catalyzes the interconversion between ADP-D-glycero-beta-D-manno-heptose and ADP-L-glycero-beta-D-manno-heptose via an epimerization at carbon 6 of the heptose. The protein is ADP-L-glycero-D-manno-heptose-6-epimerase of Fusobacterium nucleatum subsp. nucleatum (strain ATCC 25586 / DSM 15643 / BCRC 10681 / CIP 101130 / JCM 8532 / KCTC 2640 / LMG 13131 / VPI 4355).